Here is a 709-residue protein sequence, read N- to C-terminus: Nicastrin (709 aa).

A signal peptide spans 1-33 (MATAGGGSGADPGSRGLLRLLSFCVLLAGLCRG). Residues 34 to 669 (NSVERKIYIP…IFLIASKELE (636 aa)) lie on the Extracellular side of the membrane. N-linked (GlcNAc...) asparagine glycans are attached at residues Asn-45 and Asn-55. 2 disulfides stabilise this stretch: Cys-50/Cys-62 and Cys-140/Cys-159. Residues Asn-187, Asn-200, and Asn-204 are each glycosylated (N-linked (GlcNAc...) asparagine). 2 disulfide bridges follow: Cys-195–Cys-213 and Cys-230–Cys-248. N-linked (GlcNAc...) asparagine glycans are attached at residues Asn-264, Asn-387, Asn-417, Asn-435, Asn-464, Asn-506, Asn-530, Asn-562, Asn-573, Asn-580, and Asn-612. Cys-586 and Cys-620 are joined by a disulfide. The helical transmembrane segment at 670–690 (LITLTVGFGILIFSLIVTYCI) threads the bilayer. Residues 691 to 709 (NAKADVLFIAPREPGAVSY) are Cytoplasmic-facing.

The protein belongs to the nicastrin family. In terms of assembly, component of the gamma-secretase complex. The functional gamma-secretase complex is composed of at least four polypeptides: a presenilin homodimer (PSEN1 or PSEN2), nicastrin (NCSTN), APH1 (APH1A or APH1B) and PSENEN/PEN2. Binds to proteolytic processed C-terminal fragments C83 and C99 of the amyloid precursor protein (APP). Interacts with PSEN1 and PSEN2. In terms of processing, N-glycosylated. In terms of tissue distribution, detected in brain (at protein level). Widely expressed.

Its subcellular location is the membrane. It localises to the cytoplasmic vesicle membrane. The protein resides in the melanosome. Its function is as follows. Essential subunit of the gamma-secretase complex, an endoprotease complex that catalyzes the intramembrane cleavage of integral membrane proteins such as Notch receptors and APP (amyloid-beta precursor protein). The gamma-secretase complex plays a role in Notch and Wnt signaling cascades and regulation of downstream processes via its role in processing key regulatory proteins, and by regulating cytosolic CTNNB1 levels. This chain is Nicastrin (NCSTN), found in Homo sapiens (Human).